A 258-amino-acid polypeptide reads, in one-letter code: MTYLSRILEEKRQAVLALKQQRPLQHYLEQETELSPCRDFQGCLKRSVDRIKLIAEIKKASPSRGLIVSDFKPLEMARRYMDLGASAFSVLTEEVFFQGSPDYLKEVRRAFSLPVLRKDFILDECQIFESRLMGADAILLIVAALDPHQLQDYLDLARQTGLHVLVEVHDHRELDIALNAGSMIIGINNRDLRDFSVNLHTSIKLRPYIPEGIVSVSESGVKTAADAALLDNASFDAVLIGEGLHVSEDLKRVIWTET.

The protein belongs to the TrpC family.

The catalysed reaction is 1-(2-carboxyphenylamino)-1-deoxy-D-ribulose 5-phosphate + H(+) = (1S,2R)-1-C-(indol-3-yl)glycerol 3-phosphate + CO2 + H2O. Its pathway is amino-acid biosynthesis; L-tryptophan biosynthesis; L-tryptophan from chorismate: step 4/5. In Chlorobium phaeobacteroides (strain DSM 266 / SMG 266 / 2430), this protein is Indole-3-glycerol phosphate synthase.